The chain runs to 260 residues: Acetylglutamate kinase (260 aa).

Substrate is bound by residues glycine 41–glycine 42, arginine 63, and asparagine 156.

It belongs to the acetylglutamate kinase family. ArgB subfamily.

It is found in the cytoplasm. It carries out the reaction N-acetyl-L-glutamate + ATP = N-acetyl-L-glutamyl 5-phosphate + ADP. It functions in the pathway amino-acid biosynthesis; L-arginine biosynthesis; N(2)-acetyl-L-ornithine from L-glutamate: step 2/4. Functionally, catalyzes the ATP-dependent phosphorylation of N-acetyl-L-glutamate. The protein is Acetylglutamate kinase of Halalkalibacterium halodurans (strain ATCC BAA-125 / DSM 18197 / FERM 7344 / JCM 9153 / C-125) (Bacillus halodurans).